A 932-amino-acid polypeptide reads, in one-letter code: Glycine dehydrogenase (decarboxylating) (932 aa).

N6-(pyridoxal phosphate)lysine is present on lysine 685.

This sequence belongs to the GcvP family. As to quaternary structure, the glycine cleavage system is composed of four proteins: P, T, L and H. Pyridoxal 5'-phosphate serves as cofactor.

It catalyses the reaction N(6)-[(R)-lipoyl]-L-lysyl-[glycine-cleavage complex H protein] + glycine + H(+) = N(6)-[(R)-S(8)-aminomethyldihydrolipoyl]-L-lysyl-[glycine-cleavage complex H protein] + CO2. Its function is as follows. The glycine cleavage system catalyzes the degradation of glycine. The P protein binds the alpha-amino group of glycine through its pyridoxal phosphate cofactor; CO(2) is released and the remaining methylamine moiety is then transferred to the lipoamide cofactor of the H protein. The chain is Glycine dehydrogenase (decarboxylating) from Brucella melitensis biotype 1 (strain ATCC 23456 / CCUG 17765 / NCTC 10094 / 16M).